The sequence spans 107 residues: ATP-dependent Clp protease adapter protein ClpS (107 aa).

It belongs to the ClpS family. Binds to the N-terminal domain of the chaperone ClpA.

Functionally, involved in the modulation of the specificity of the ClpAP-mediated ATP-dependent protein degradation. This is ATP-dependent Clp protease adapter protein ClpS from Acinetobacter baylyi (strain ATCC 33305 / BD413 / ADP1).